Reading from the N-terminus, the 849-residue chain is Villin-1 (849 aa).

Gelsolin-like repeat units lie at residues 30–107 (IEKS…DKFL), 147–213 (RVTE…EDGK), 262–335 (VPVE…TVEF), 405–475 (QEQL…PEMF), and 527–566 (AIQVDLAASSLNSSHCYILQAGGSFFTWLGSLSSPSDHNL). The disordered stretch occupies residues 739–849 (ETPERSLRKS…AVATGTPRRR (111 aa)). Composition is skewed to low complexity over residues 747–782 (KSSSSSLPRRSPGTSSSEPTTPEQRAAARTFASAST) and 791–823 (PAALSPSLSTPSPSPRSRSSASSSPASWNSTPS).

Belongs to the villin/gelsolin family. As to expression, expressed in roots, young leaves, and inflorescences, mostly in the vasculature of roots, leaves, and filaments of the anthers. Also detected in guard cells.

The protein resides in the cytoplasm. Its subcellular location is the cytoskeleton. Its function is as follows. Ca(2+)-independent actin-binding protein. Binds actin microfilaments (MFs). Involved in actin filament bundling, severing and capping. Caps the barbed end of actin filaments and protects them from disassembly. Promotes VLN3-mediated MF severing. In Oryza sativa subsp. japonica (Rice), this protein is Villin-1.